The chain runs to 105 residues: uncharacterized protein (105 aa).

It belongs to the EspC family.

In terms of biological role, may be involved in assembly of the ESX-1 / type VII specialized secretion system (T7SS), which exports several proteins including EsxA and EsxB. Involved in DNA conjugation, in at least recipient strain. This is an uncharacterized protein from Mycolicibacterium smegmatis (strain MKD8) (Mycobacterium smegmatis).